A 164-amino-acid chain; its full sequence is Interferon gamma (164 aa).

Residues 1-19 (MTCQTYNLFVLSVIMIYYG) form the signal peptide. N-linked (GlcNAc...) asparagine glycans are attached at residues asparagine 42 and asparagine 61.

Belongs to the type II (or gamma) interferon family. Homodimer.

The protein resides in the secreted. Functionally, produced by lymphocytes activated by specific antigens or mitogens. IFN-gamma, in addition to having antiviral activity, has important immunoregulatory functions. It is a potent activator of macrophages, it has antiproliferative effects on transformed cells and it can potentiate the antiviral and antitumor effects of the type I interferons. The sequence is that of Interferon gamma (IFNG) from Coturnix japonica (Japanese quail).